We begin with the raw amino-acid sequence, 284 residues long: MTDHYPSPRALLDRYDLRAKKSWGQNFLGDEAVLDDIARLAAPRAGDAVLELGAGLGHLTARLLARGARVAAVERDRDMVRVLRGELGDRITLLEADAARLDYADLAARFGAAAAAGEGPRLAVVGNLPYHLTSPILFSILDQVAHVSRAVFLLQREVAERLAAPPASRDWGVLSVLLQREADVSVERIVPPGAFWPPPKVASAVLCALFRPPADAVADPARFRRLVKAGFGQRRKTLRNALGSAKLADPARLEAAFAAAGVDPGRRGETLTLAEWAALERTLG.

Residues Asn-26, Leu-28, Gly-53, Glu-74, Asp-97, and Asn-127 each coordinate S-adenosyl-L-methionine.

It belongs to the class I-like SAM-binding methyltransferase superfamily. rRNA adenine N(6)-methyltransferase family. RsmA subfamily.

The protein resides in the cytoplasm. It carries out the reaction adenosine(1518)/adenosine(1519) in 16S rRNA + 4 S-adenosyl-L-methionine = N(6)-dimethyladenosine(1518)/N(6)-dimethyladenosine(1519) in 16S rRNA + 4 S-adenosyl-L-homocysteine + 4 H(+). Specifically dimethylates two adjacent adenosines (A1518 and A1519) in the loop of a conserved hairpin near the 3'-end of 16S rRNA in the 30S particle. May play a critical role in biogenesis of 30S subunits. The sequence is that of Ribosomal RNA small subunit methyltransferase A from Anaeromyxobacter dehalogenans (strain 2CP-1 / ATCC BAA-258).